A 418-amino-acid polypeptide reads, in one-letter code: Gamma-glutamyl phosphate reductase (418 aa).

This sequence belongs to the gamma-glutamyl phosphate reductase family.

The protein resides in the cytoplasm. The catalysed reaction is L-glutamate 5-semialdehyde + phosphate + NADP(+) = L-glutamyl 5-phosphate + NADPH + H(+). The protein operates within amino-acid biosynthesis; L-proline biosynthesis; L-glutamate 5-semialdehyde from L-glutamate: step 2/2. In terms of biological role, catalyzes the NADPH-dependent reduction of L-glutamate 5-phosphate into L-glutamate 5-semialdehyde and phosphate. The product spontaneously undergoes cyclization to form 1-pyrroline-5-carboxylate. This Trichlorobacter lovleyi (strain ATCC BAA-1151 / DSM 17278 / SZ) (Geobacter lovleyi) protein is Gamma-glutamyl phosphate reductase.